A 647-amino-acid chain; its full sequence is Threonine--tRNA ligase (647 aa).

In terms of domain architecture, TGS spans 1-63 (MADISIKFPD…ASDGSIEIVT (63 aa)). The segment at 242-540 (DHRVIGNQLD…LTEIYKGAFP (299 aa)) is catalytic. Cys336, His387, and His517 together coordinate Zn(2+).

The protein belongs to the class-II aminoacyl-tRNA synthetase family. In terms of assembly, homodimer. Zn(2+) serves as cofactor.

The protein localises to the cytoplasm. The enzyme catalyses tRNA(Thr) + L-threonine + ATP = L-threonyl-tRNA(Thr) + AMP + diphosphate + H(+). In terms of biological role, catalyzes the attachment of threonine to tRNA(Thr) in a two-step reaction: L-threonine is first activated by ATP to form Thr-AMP and then transferred to the acceptor end of tRNA(Thr). Also edits incorrectly charged L-seryl-tRNA(Thr). The chain is Threonine--tRNA ligase from Levilactobacillus brevis (strain ATCC 367 / BCRC 12310 / CIP 105137 / JCM 1170 / LMG 11437 / NCIMB 947 / NCTC 947) (Lactobacillus brevis).